A 71-amino-acid chain; its full sequence is SRY-related protein LG28 (71 aa).

The HMG box DNA-binding region spans 1–68; the sequence is VKRPMNAFMV…KHMADYPDYK (68 aa).

It localises to the nucleus. In Eublepharis macularius (Leopard gecko), this protein is SRY-related protein LG28.